The chain runs to 230 residues: MKIGIIGAMEPEVAHLVESMENSTSTTIAGIEFVAGQLAGQEVIVTRSGIGKVTASIATTLLIEKYAPDAIINTGSAGGFADDLAIGDIVISSEVRHHDVDVTAFGYEIGQMAQQPAAFLPDAKLVAAAQKAVASLGEVKAIEGLICTGDSFICDPVRTKTMLENFPTMAACEMEAAAIAQVCHQFAVPFVVIRSLSDNANDDSAVDFDEYIIKAGLHSALMVIALIKQL.

The active-site Proton acceptor is Glu-12. Substrate contacts are provided by residues Gly-78, Ile-153, and 174-175; that span reads ME. Asp-198 (proton donor) is an active-site residue.

It belongs to the PNP/UDP phosphorylase family. MtnN subfamily.

The catalysed reaction is S-adenosyl-L-homocysteine + H2O = S-(5-deoxy-D-ribos-5-yl)-L-homocysteine + adenine. It catalyses the reaction S-methyl-5'-thioadenosine + H2O = 5-(methylsulfanyl)-D-ribose + adenine. The enzyme catalyses 5'-deoxyadenosine + H2O = 5-deoxy-D-ribose + adenine. It participates in amino-acid biosynthesis; L-methionine biosynthesis via salvage pathway; S-methyl-5-thio-alpha-D-ribose 1-phosphate from S-methyl-5'-thioadenosine (hydrolase route): step 1/2. Functionally, catalyzes the irreversible cleavage of the glycosidic bond in both 5'-methylthioadenosine (MTA) and S-adenosylhomocysteine (SAH/AdoHcy) to adenine and the corresponding thioribose, 5'-methylthioribose and S-ribosylhomocysteine, respectively. Also cleaves 5'-deoxyadenosine, a toxic by-product of radical S-adenosylmethionine (SAM) enzymes, into 5-deoxyribose and adenine. This is 5'-methylthioadenosine/S-adenosylhomocysteine nucleosidase from Shewanella piezotolerans (strain WP3 / JCM 13877).